The chain runs to 681 residues: NAD(P)H-quinone oxidoreductase chain 5 (681 aa).

The next 16 helical transmembrane spans lie at 7 to 27 (LAWLIPVLPLFGATVVGIGLI), 39 to 59 (INAVFIISCLGAALVMSGALL), 89 to 109 (IDHLSALMLVIVTSVALLVMI), 120 to 140 (GYVRFYAYLSLFASSMLGLVI), 144 to 164 (LVQVYIFWELVGMCSYLLIGF), 188 to 208 (GLLLGILGLYWATGSFDFGTI), 219 to 239 (GVLSGAIAAILAILVFLGPVA), 258 to 278 (TPISALIHAATMVAAGVFLVA), 289 to 309 (VVMNTIAFTGCFTAFLGATIA), 327 to 347 (LGYMVMAMGIGAYSAGLFHLM), 352 to 372 (FKAMLFLCSGSVIHGMEGVVG), 395 to 415 (ATCFLIGTLAICGIPPFAGFW), 420 to 440 (ILGLAFQANPLLWFVGWATAG), 509 to 529 (LTMTFPLMALAVPSVLIGLLG), 558 to 578 (FYVMAGNSIGIALIGITVASL), and 660 to 680 (AQFYALIVFGAVLGFVIVFSL).

Belongs to the complex I subunit 5 family.

The protein resides in the cell membrane. The enzyme catalyses a plastoquinone + NADH + (n+1) H(+)(in) = a plastoquinol + NAD(+) + n H(+)(out). It catalyses the reaction a plastoquinone + NADPH + (n+1) H(+)(in) = a plastoquinol + NADP(+) + n H(+)(out). Functionally, NDH-1 shuttles electrons from NAD(P)H, via FMN and iron-sulfur (Fe-S) centers, to quinones in the respiratory chain. The immediate electron acceptor for the enzyme in this species is believed to be plastoquinone. Couples the redox reaction to proton translocation (for every two electrons transferred, four hydrogen ions are translocated across the cytoplasmic membrane), and thus conserves the redox energy in a proton gradient. This Synechocystis sp. (strain ATCC 27184 / PCC 6803 / Kazusa) protein is NAD(P)H-quinone oxidoreductase chain 5 (ndhF).